Reading from the N-terminus, the 124-residue chain is Small ribosomal subunit protein bS6 (124 aa).

Belongs to the bacterial ribosomal protein bS6 family.

Its function is as follows. Binds together with bS18 to 16S ribosomal RNA. This chain is Small ribosomal subunit protein bS6, found in Campylobacter lari (strain RM2100 / D67 / ATCC BAA-1060).